The sequence spans 309 residues: 2-phosphoglycerate kinase (309 aa).

The region spanning 5–92 is the ATP-cone domain; the sequence is NDIIVRGKSY…LWRMVLGRRP (88 aa).

It belongs to the 2-phosphoglycerate kinase family. A divalent metal cation is required as a cofactor.

The enzyme catalyses (2R)-2-phosphoglycerate + ATP = (2R)-2,3-bisphosphoglycerate + ADP + H(+). It participates in thermoadapter biosynthesis; cyclic 2,3-diphosphoglycerate biosynthesis; cyclic 2,3-diphosphoglycerate from 2-phospho-D-glycerate: step 1/2. Catalyzes the phosphorylation of 2-phosphoglycerate to 2,3-diphosphoglycerate. Involved in the biosynthesis of cyclic 2,3-bisphosphoglycerate, a thermoprotectant. The chain is 2-phosphoglycerate kinase from Methanocaldococcus jannaschii (strain ATCC 43067 / DSM 2661 / JAL-1 / JCM 10045 / NBRC 100440) (Methanococcus jannaschii).